The sequence spans 382 residues: UDP-N-acetylglucosamine--N-acetylmuramyl-(pentapeptide) pyrophosphoryl-undecaprenol N-acetylglucosamine transferase (382 aa).

UDP-N-acetyl-alpha-D-glucosamine is bound by residues 17–19 (TAG), Asn137, Arg179, Ser213, and Gln308.

The protein belongs to the glycosyltransferase 28 family. MurG subfamily.

Its subcellular location is the cell membrane. It carries out the reaction di-trans,octa-cis-undecaprenyl diphospho-N-acetyl-alpha-D-muramoyl-L-alanyl-D-glutamyl-meso-2,6-diaminopimeloyl-D-alanyl-D-alanine + UDP-N-acetyl-alpha-D-glucosamine = di-trans,octa-cis-undecaprenyl diphospho-[N-acetyl-alpha-D-glucosaminyl-(1-&gt;4)]-N-acetyl-alpha-D-muramoyl-L-alanyl-D-glutamyl-meso-2,6-diaminopimeloyl-D-alanyl-D-alanine + UDP + H(+). Its pathway is cell wall biogenesis; peptidoglycan biosynthesis. Functionally, cell wall formation. Catalyzes the transfer of a GlcNAc subunit on undecaprenyl-pyrophosphoryl-MurNAc-pentapeptide (lipid intermediate I) to form undecaprenyl-pyrophosphoryl-MurNAc-(pentapeptide)GlcNAc (lipid intermediate II). This is UDP-N-acetylglucosamine--N-acetylmuramyl-(pentapeptide) pyrophosphoryl-undecaprenol N-acetylglucosamine transferase from Rhodococcus jostii (strain RHA1).